Reading from the N-terminus, the 402-residue chain is MKISLFGYGKTTRAIAENLVDKFGSFDIYDDHFVETKKDTLGNLLLNPNDFDNNLSDIEIPSPGFPPKHKLIQKAKNLQSEYDFFYDIMPKSVWISGTNGKTTTTQMATHLLSHIGAVMGGNVGTPLAELNPYEKLWILETSSFTLHYTHKAKPEIYALLPISPDHLSWHGSFDNYVQDKLSVLKRMNECDVTILPKIYANTPTKAHIISYKDEKDLAAKFSIDMEKISFKSPFLLDAIMALAIEKILLDTLSYELLNSFVMEKNKLEEIKDSQNRLWVNDTKATNESAVMAALNRYKDKKIHLIIGGDDKGVDLSNLFDFMKGFDIELYAIGISTEKMLDYAKKANLKAYKCEVLSKAVNEISNHLRVNEVALLSPACASLDQFNSYAERGKVFKECVNKI.

Residue 97–103 (GTNGKTT) participates in ATP binding.

The protein belongs to the MurCDEF family.

Its subcellular location is the cytoplasm. It carries out the reaction UDP-N-acetyl-alpha-D-muramoyl-L-alanine + D-glutamate + ATP = UDP-N-acetyl-alpha-D-muramoyl-L-alanyl-D-glutamate + ADP + phosphate + H(+). Its pathway is cell wall biogenesis; peptidoglycan biosynthesis. Functionally, cell wall formation. Catalyzes the addition of glutamate to the nucleotide precursor UDP-N-acetylmuramoyl-L-alanine (UMA). The chain is UDP-N-acetylmuramoylalanine--D-glutamate ligase from Campylobacter jejuni (strain RM1221).